Here is a 439-residue protein sequence, read N- to C-terminus: Trigger factor (439 aa).

The region spanning 170–255 is the PPIase FKBP-type domain; the sequence is GDTVVIDFDG…IHELKKLETP (86 aa).

The protein belongs to the FKBP-type PPIase family. Tig subfamily.

The protein localises to the cytoplasm. The enzyme catalyses [protein]-peptidylproline (omega=180) = [protein]-peptidylproline (omega=0). Involved in protein export. Acts as a chaperone by maintaining the newly synthesized protein in an open conformation. Functions as a peptidyl-prolyl cis-trans isomerase. In Oenococcus oeni (strain ATCC BAA-331 / PSU-1), this protein is Trigger factor.